The sequence spans 294 residues: 33 kDa chaperonin (294 aa).

Cystine bridges form between Cys239-Cys241 and Cys272-Cys275.

It belongs to the HSP33 family. Under oxidizing conditions two disulfide bonds are formed involving the reactive cysteines. Under reducing conditions zinc is bound to the reactive cysteines and the protein is inactive.

It localises to the cytoplasm. Redox regulated molecular chaperone. Protects both thermally unfolding and oxidatively damaged proteins from irreversible aggregation. Plays an important role in the bacterial defense system toward oxidative stress. In Listeria monocytogenes serovar 1/2a (strain ATCC BAA-679 / EGD-e), this protein is 33 kDa chaperonin.